The following is a 376-amino-acid chain: MQNRRKAFDKLCPNTMPDLSSRMGKRQSKTEKKLHKNIFTHTGPVTIYVDPPSSVDSAALATIDWQDLADCNSVIQQDAAGGALTEQQQQGHCLPGESDFDLQEFRDAVDQFIADQPSLMQPGLGSSGFQLPCNGSVFEPCMTDTLQPQPDHLLPISVQSIPSTEQYWRDVADHNQKALGDALVENNQLQVSLTEKQEEIASLKEKNIQLNELANQAKHLASVLDKLMKERPKHSSGATQGRLPVKRSLEDFYPQSNEPDSTQVDEILREISKKCNIALMGNELSESKRPRLEPMDTMGWQEEGITKIKMCGAFNGLKTSTGLNSVNLGETELEEDVSFRTSIKEHSTIRTLAFPQGNAFTIRTAAGGYKFRWVPN.

The stretch at 165–213 (EQYWRDVADHNQKALGDALVENNQLQVSLTEKQEEIASLKEKNIQLNEL) forms a coiled coil. A disordered region spans residues 230–261 (ERPKHSSGATQGRLPVKRSLEDFYPQSNEPDS). A TIRT domain region spans residues 331 to 376 (TELEEDVSFRTSIKEHSTIRTLAFPQGNAFTIRTAAGGYKFRWVPN).

The protein belongs to the geminin family. As to quaternary structure, component of the EDM complex, at least composed of e2f4, e2f5, mcidas and tfdp1.

It is found in the nucleus. Transcription regulator specifically required for multiciliate cell differentiation. Acts in a multiprotein complex containing e2f4 and e2f5 that binds and activate genes required for centriole biogenesis. Activates genes required for centriole assembly (plk4, cep152) and genes specifically required for motile cilia formation (foxj1). Also promotes the deuterosome pathway of centriole biogenesis by activating expression of deup1, but not its paralog cep63. This is Multicilin (mcidas) from Xenopus tropicalis (Western clawed frog).